We begin with the raw amino-acid sequence, 218 residues long: MASLSTITQPSLVHIPGESVLHHVPSTCSFPWKPTINTKRIICSPARNSSEVSAEAETEGGSSTAVDEAPKESPSLISALNVERALRGLPITDVDHYGRLGIFRNCSYDQVTIGYKERVKELKEQGLDEEQLKTKMDLIKESYTILSTVEERRMYDWSLARSEKAERYVWPFEVDIMEPSREEPPPQEPEDVGPTRILGYFIGAWLVLGVALSVAFNR.

The N-terminal 53 residues, 1 to 53, are a transit peptide targeting the chloroplast; that stretch reads MASLSTITQPSLVHIPGESVLHHVPSTCSFPWKPTINTKRIICSPARNSSEVS. Positions 47-72 are disordered; that stretch reads RNSSEVSAEAETEGGSSTAVDEAPKE. A J domain is found at 95-159; sequence DHYGRLGIFR…EERRMYDWSL (65 aa). A helical transmembrane segment spans residues 197–217; the sequence is ILGYFIGAWLVLGVALSVAFN.

In terms of assembly, part of the chloroplast NDH complex, composed of a mixture of chloroplast and nucleus encoded subunits. Component of the electron donor-binding subcomplex, at least composed of NDHS, NDHT and NDHU.

It is found in the plastid. Its subcellular location is the chloroplast thylakoid membrane. The catalysed reaction is a plastoquinone + NADH + (n+1) H(+)(in) = a plastoquinol + NAD(+) + n H(+)(out). The enzyme catalyses a plastoquinone + NADPH + (n+1) H(+)(in) = a plastoquinol + NADP(+) + n H(+)(out). NDH shuttles electrons from NAD(P)H:plastoquinone, via FMN and iron-sulfur (Fe-S) centers, to quinones in the photosynthetic chain and possibly in a chloroplast respiratory chain. The immediate electron acceptor for the enzyme in this species is believed to be plastoquinone. Couples the redox reaction to proton translocation, and thus conserves the redox energy in a proton gradient. In Arabidopsis thaliana (Mouse-ear cress), this protein is NAD(P)H-quinone oxidoreductase subunit U, chloroplastic.